Reading from the N-terminus, the 165-residue chain is NAD(P)H-quinone oxidoreductase subunit J, chloroplastic (165 aa).

Belongs to the complex I 30 kDa subunit family. In terms of assembly, NDH is composed of at least 16 different subunits, 5 of which are encoded in the nucleus.

It is found in the plastid. The protein localises to the chloroplast thylakoid membrane. It catalyses the reaction a plastoquinone + NADH + (n+1) H(+)(in) = a plastoquinol + NAD(+) + n H(+)(out). It carries out the reaction a plastoquinone + NADPH + (n+1) H(+)(in) = a plastoquinol + NADP(+) + n H(+)(out). NDH shuttles electrons from NAD(P)H:plastoquinone, via FMN and iron-sulfur (Fe-S) centers, to quinones in the photosynthetic chain and possibly in a chloroplast respiratory chain. The immediate electron acceptor for the enzyme in this species is believed to be plastoquinone. Couples the redox reaction to proton translocation, and thus conserves the redox energy in a proton gradient. This is NAD(P)H-quinone oxidoreductase subunit J, chloroplastic from Ipomoea purpurea (Common morning glory).